The following is an 80-amino-acid chain: Acyl carrier protein (80 aa).

The Carrier domain occupies 4-79; it reads EEIKDKVFDI…QAIDYIVNAK (76 aa). Serine 39 is modified (O-(pantetheine 4'-phosphoryl)serine).

Belongs to the acyl carrier protein (ACP) family. 4'-phosphopantetheine is transferred from CoA to a specific serine of apo-ACP by AcpS. This modification is essential for activity because fatty acids are bound in thioester linkage to the sulfhydryl of the prosthetic group.

It is found in the cytoplasm. Its pathway is lipid metabolism; fatty acid biosynthesis. In terms of biological role, carrier of the growing fatty acid chain in fatty acid biosynthesis. The protein is Acyl carrier protein of Prosthecochloris aestuarii (strain DSM 271 / SK 413).